We begin with the raw amino-acid sequence, 303 residues long: Shikimate kinase 1, chloroplastic (303 aa).

The N-terminal 66 residues, 1–66, are a transit peptide targeting the chloroplast; that stretch reads MEAAITQRIQ…QRRAVSPAVS (66 aa). 109-116 serves as a coordination point for ATP; sequence GMMGSGKT. Thr-116 is a Mg(2+) binding site. Residues Asp-134, Arg-159, and Gly-181 each coordinate substrate. Arg-220 contacts ATP.

It belongs to the shikimate kinase family. In terms of assembly, homodimer. It depends on Mg(2+) as a cofactor.

It is found in the plastid. It localises to the chloroplast. The catalysed reaction is shikimate + ATP = 3-phosphoshikimate + ADP + H(+). It functions in the pathway metabolic intermediate biosynthesis; chorismate biosynthesis; chorismate from D-erythrose 4-phosphate and phosphoenolpyruvate: step 5/7. Functionally, catalyzes the specific phosphorylation of the 3-hydroxyl group of shikimic acid using ATP as a cosubstrate. In Arabidopsis thaliana (Mouse-ear cress), this protein is Shikimate kinase 1, chloroplastic (SK1).